An 85-amino-acid polypeptide reads, in one-letter code: U4-theraphotoxin-Hhn1l (85 aa).

A signal peptide spans 1–22 (MKVTLIAFLTCAAVLVLHTTAA). A propeptide spanning residues 23–48 (EELEAESQLMGVGMPDTELAAVDEER) is cleaved from the precursor. Disulfide bonds link Cys-52-Cys-66, Cys-56-Cys-77, and Cys-71-Cys-82.

Belongs to the neurotoxin 12 (Hwtx-2) family. 02 (Hwtx-2) subfamily. As to expression, expressed by the venom gland.

The protein resides in the secreted. In terms of biological role, postsynaptic neurotoxin. The sequence is that of U4-theraphotoxin-Hhn1l from Cyriopagopus hainanus (Chinese bird spider).